Reading from the N-terminus, the 187-residue chain is Elongation factor P (187 aa).

This sequence belongs to the elongation factor P family.

The protein resides in the cytoplasm. It participates in protein biosynthesis; polypeptide chain elongation. Its function is as follows. Involved in peptide bond synthesis. Stimulates efficient translation and peptide-bond synthesis on native or reconstituted 70S ribosomes in vitro. Probably functions indirectly by altering the affinity of the ribosome for aminoacyl-tRNA, thus increasing their reactivity as acceptors for peptidyl transferase. The polypeptide is Elongation factor P (Helicobacter hepaticus (strain ATCC 51449 / 3B1)).